Here is a 295-residue protein sequence, read N- to C-terminus: Protein NEOXANTHIN-DEFICIENT 1 (295 aa).

The tract at residues 221-251 (PAKVSGPSESDADKENSSEDQSSNVESVSRV) is disordered.

In terms of biological role, required for neoxanthin biosynthesis. Probably not involved directly in the enzymatic conversion of violaxanthin to neoxanthin. Is necessary but not sufficient for neoxanthin synthesis. Seems not required for abscisic acid (ABA) biosynthesis in response to drought stress. The sequence is that of Protein NEOXANTHIN-DEFICIENT 1 from Solanum lycopersicum (Tomato).